We begin with the raw amino-acid sequence, 421 residues long: UDP-N-acetylglucosamine 1-carboxyvinyltransferase (421 aa).

22-23 (KN) contacts phosphoenolpyruvate. UDP-N-acetyl-alpha-D-glucosamine is bound at residue Arg-92. The active-site Proton donor is the Cys-116. Residue Cys-116 is modified to 2-(S-cysteinyl)pyruvic acid O-phosphothioketal. Residues 121–125 (RPVDQ), Asp-304, and Ile-326 contribute to the UDP-N-acetyl-alpha-D-glucosamine site.

Belongs to the EPSP synthase family. MurA subfamily.

It is found in the cytoplasm. It carries out the reaction phosphoenolpyruvate + UDP-N-acetyl-alpha-D-glucosamine = UDP-N-acetyl-3-O-(1-carboxyvinyl)-alpha-D-glucosamine + phosphate. Its pathway is cell wall biogenesis; peptidoglycan biosynthesis. Its function is as follows. Cell wall formation. Adds enolpyruvyl to UDP-N-acetylglucosamine. The polypeptide is UDP-N-acetylglucosamine 1-carboxyvinyltransferase (Bordetella avium (strain 197N)).